The following is a 353-amino-acid chain: Photosystem II protein D1 (353 aa).

Position 2 is an N-acetylthreonine (Thr2). Position 2 is a phosphothreonine (Thr2). The next 3 membrane-spanning stretches (helical) occupy residues 29-46 (YIGW…TATS), 118-133 (HFLL…EWEL), and 142-156 (WIAV…AATA). Residue His118 participates in chlorophyll a binding. Position 126 (Tyr126) interacts with pheophytin a. The [CaMn4O5] cluster site is built by Asp170 and Glu189. Residues 197–218 (FHMLGVAGVFGGSLFSAMHGSL) form a helical membrane-spanning segment. Residue His198 coordinates chlorophyll a. Residues His215 and 264–265 (SF) contribute to the a quinone site. His215 serves as a coordination point for Fe cation. His272 serves as a coordination point for Fe cation. The chain crosses the membrane as a helical span at residues 274-288 (FLAAWPVVGIWFTAL). His332, Glu333, Asp342, and Ala344 together coordinate [CaMn4O5] cluster. The propeptide occupies 345 to 353 (AIEAPSTNG).

It belongs to the reaction center PufL/M/PsbA/D family. PSII is composed of 1 copy each of membrane proteins PsbA, PsbB, PsbC, PsbD, PsbE, PsbF, PsbH, PsbI, PsbJ, PsbK, PsbL, PsbM, PsbT, PsbX, PsbY, PsbZ, Psb30/Ycf12, at least 3 peripheral proteins of the oxygen-evolving complex and a large number of cofactors. It forms dimeric complexes. It depends on The D1/D2 heterodimer binds P680, chlorophylls that are the primary electron donor of PSII, and subsequent electron acceptors. It shares a non-heme iron and each subunit binds pheophytin, quinone, additional chlorophylls, carotenoids and lipids. D1 provides most of the ligands for the Mn4-Ca-O5 cluster of the oxygen-evolving complex (OEC). There is also a Cl(-1) ion associated with D1 and D2, which is required for oxygen evolution. The PSII complex binds additional chlorophylls, carotenoids and specific lipids. as a cofactor. Post-translationally, tyr-161 forms a radical intermediate that is referred to as redox-active TyrZ, YZ or Y-Z. C-terminally processed by CTPA; processing is essential to allow assembly of the oxygen-evolving complex and thus photosynthetic growth.

It is found in the plastid. Its subcellular location is the chloroplast thylakoid membrane. It catalyses the reaction 2 a plastoquinone + 4 hnu + 2 H2O = 2 a plastoquinol + O2. Its function is as follows. Photosystem II (PSII) is a light-driven water:plastoquinone oxidoreductase that uses light energy to abstract electrons from H(2)O, generating O(2) and a proton gradient subsequently used for ATP formation. It consists of a core antenna complex that captures photons, and an electron transfer chain that converts photonic excitation into a charge separation. The D1/D2 (PsbA/PsbD) reaction center heterodimer binds P680, the primary electron donor of PSII as well as several subsequent electron acceptors. This chain is Photosystem II protein D1, found in Nicotiana debneyi (Debney's tobacco).